Consider the following 122-residue polypeptide: Modulator protein MzrA (122 aa).

The Cytoplasmic portion of the chain corresponds to 1-10; the sequence is MKILTRIPRR. A helical membrane pass occupies residues 11 to 31; the sequence is LLPWLLGGALALVAVSFAPAL. The Periplasmic segment spans residues 32-122; that stretch reads LSHETVVQIR…NQDANRSIYS (91 aa).

This sequence belongs to the MzrA family. In terms of assembly, interacts with EnvZ.

The protein localises to the cell inner membrane. Functionally, modulates the activity of the EnvZ/OmpR two-component regulatory system, probably by directly modulating EnvZ enzymatic activity and increasing stability of phosphorylated OmpR. The chain is Modulator protein MzrA from Pantoea sp. (strain At-9b).